The sequence spans 200 residues: Probable UbiX-like flavin prenyltransferase (200 aa).

Residues 9–11 (GAT), Ser-36, 87–90 (SMKT), and Arg-122 contribute to the FMN site.

This sequence belongs to the UbiX/PAD1 family. YclB subfamily. As to quaternary structure, homododecamer.

It carries out the reaction dimethylallyl phosphate + FMNH2 = prenylated FMNH2 + phosphate. Functionally, involved in the non-oxidative decarboxylation and detoxification of phenolic derivatives under both aerobic and anaerobic conditions. Flavin prenyltransferase that catalyzes the synthesis of the prenylated FMN cofactor (prenyl-FMN) for phenolic acid decarboxylase. This Streptomyces sp. (strain D7) protein is Probable UbiX-like flavin prenyltransferase.